The sequence spans 359 residues: 3-dehydroquinate synthase (359 aa).

Residues 69 to 74, 103 to 107, 127 to 128, K140, and K149 each bind NAD(+); these read DAETGK, GAATD, and TT. Residues E182, H244, and H260 each contribute to the Zn(2+) site.

This sequence belongs to the sugar phosphate cyclases superfamily. Dehydroquinate synthase family. Co(2+) is required as a cofactor. Requires Zn(2+) as cofactor. The cofactor is NAD(+).

The protein localises to the cytoplasm. It catalyses the reaction 7-phospho-2-dehydro-3-deoxy-D-arabino-heptonate = 3-dehydroquinate + phosphate. It participates in metabolic intermediate biosynthesis; chorismate biosynthesis; chorismate from D-erythrose 4-phosphate and phosphoenolpyruvate: step 2/7. Functionally, catalyzes the conversion of 3-deoxy-D-arabino-heptulosonate 7-phosphate (DAHP) to dehydroquinate (DHQ). The chain is 3-dehydroquinate synthase from Corynebacterium diphtheriae (strain ATCC 700971 / NCTC 13129 / Biotype gravis).